Reading from the N-terminus, the 323-residue chain is Chitinase 1 (323 aa).

An N-terminal signal peptide occupies residues 1 to 20 (MRALAVVVVATAFAVVAVRG). The region spanning 21–61 (EQCGSQAGGALCPNCLCCSQYGWCGSTSAYCGSGCQSQCSG) is the Chitin-binding type-1 domain. Disulfide bonds link Cys-23–Cys-38, Cys-32–Cys-44, Cys-35–Cys-63, Cys-37–Cys-51, Cys-55–Cys-59, Cys-100–Cys-162, Cys-176–Cys-184, and Cys-283–Cys-315. Glu-144 acts as the Proton donor in catalysis.

It belongs to the glycosyl hydrolase 19 family. Chitinase class I subfamily. As to expression, expressed in roots, leaves, sheaths and meristems.

It catalyses the reaction Random endo-hydrolysis of N-acetyl-beta-D-glucosaminide (1-&gt;4)-beta-linkages in chitin and chitodextrins.. Functionally, hydrolyzes chitin and may play a role in defense against fungal pathogens containing chitin. The protein is Chitinase 1 (Cht1) of Oryza sativa subsp. japonica (Rice).